A 395-amino-acid chain; its full sequence is MESKTSTYLRARFREYYLTASMDAPPGMEAREWGFIFYDTPGMRRHRSFRSRKELVDYIRSTVPAHVYHSAAYYLKPDAPTMKEKIWKGADLIFDLDADHLAEYRGSGIRDFREMLERVKGETMKLLEFLLSDFGFDERMISVAFSGGRGYHIHVRDKSVLKLRSDARREIVDYLTGRGLDPERFIHKIGVDGDAGVERARSLRGPASDAPGWGGRINKAIESMVMHLRELDDEEALRLLKNVKGIGKQKARLFLSQIREENAIKSIRAGNLDFFKHASGIWNLIIPYIMEETVRALGGETDEPVTADVHRLIRFPESLHGGTGLRVTSLSINSLHAFDPLKDAVVFGDDPVHVEIIRPTTLELMGERFDLLEGKTELPEYAAVFLLARGFAEVG.

Residues D95, D97, and D302 contribute to the active site.

The protein belongs to the eukaryotic-type primase small subunit family. Heterodimer of a small subunit (PriS) and a large subunit (PriL). Mg(2+) is required as a cofactor. Requires Mn(2+) as cofactor.

Functionally, catalytic subunit of DNA primase, an RNA polymerase that catalyzes the synthesis of short RNA molecules used as primers for DNA polymerase during DNA replication. The small subunit contains the primase catalytic core and has DNA synthesis activity on its own. Binding to the large subunit stabilizes and modulates the activity, increasing the rate of DNA synthesis while decreasing the length of the DNA fragments, and conferring RNA synthesis capability. The DNA polymerase activity may enable DNA primase to also catalyze primer extension after primer synthesis. May also play a role in DNA repair. The sequence is that of DNA primase small subunit PriS from Methanothrix thermoacetophila (strain DSM 6194 / JCM 14653 / NBRC 101360 / PT) (Methanosaeta thermophila).